The primary structure comprises 132 residues: MFDGIGFMELLLIGILGLVVLGPERLPVAVRSVTGWIRALKRMANSVKDELEQELKIEQLHADLKKAESKGLANLSPELQESIDQLKQAAQSVNRPYQLDESNEQEPKIAPPQANIAETPTQSGDTHSKNNG.

The helical transmembrane segment at 2–22 (FDGIGFMELLLIGILGLVVLG) threads the bilayer. 2 stretches are compositionally biased toward polar residues: residues 86-95 (LKQAAQSVNR) and 116-132 (IAET…KNNG). Residues 86 to 132 (LKQAAQSVNRPYQLDESNEQEPKIAPPQANIAETPTQSGDTHSKNNG) form a disordered region.

It belongs to the TatB family. In terms of assembly, the Tat system comprises two distinct complexes: a TatABC complex, containing multiple copies of TatA, TatB and TatC subunits, and a separate TatA complex, containing only TatA subunits. Substrates initially bind to the TatABC complex, which probably triggers association of the separate TatA complex to form the active translocon.

It is found in the cell inner membrane. Part of the twin-arginine translocation (Tat) system that transports large folded proteins containing a characteristic twin-arginine motif in their signal peptide across membranes. Together with TatC, TatB is part of a receptor directly interacting with Tat signal peptides. TatB may form an oligomeric binding site that transiently accommodates folded Tat precursor proteins before their translocation. The protein is Sec-independent protein translocase protein TatB of Shewanella denitrificans (strain OS217 / ATCC BAA-1090 / DSM 15013).